Reading from the N-terminus, the 252-residue chain is Hydroxyacylglutathione hydrolase (252 aa).

7 residues coordinate Zn(2+): His54, His56, Asp58, His59, His111, Asp128, and His166.

This sequence belongs to the metallo-beta-lactamase superfamily. Glyoxalase II family. Monomer. Requires Zn(2+) as cofactor.

It carries out the reaction an S-(2-hydroxyacyl)glutathione + H2O = a 2-hydroxy carboxylate + glutathione + H(+). Its pathway is secondary metabolite metabolism; methylglyoxal degradation; (R)-lactate from methylglyoxal: step 2/2. Functionally, thiolesterase that catalyzes the hydrolysis of S-D-lactoyl-glutathione to form glutathione and D-lactic acid. The polypeptide is Hydroxyacylglutathione hydrolase (Aliivibrio fischeri (strain MJ11) (Vibrio fischeri)).